The following is a 162-amino-acid chain: Globin CTT-VI (162 aa).

A signal peptide spans 1 to 15 (MKFLVLALCIAAASA). Positions 17-161 (VLTTEQADLV…TYAMLFSAMD (145 aa)) constitute a Globin domain. Positions 75 and 110 each coordinate heme b.

This sequence belongs to the globin family. As to quaternary structure, homodimer.

In Chironomus thummi thummi (Midge), this protein is Globin CTT-VI (CTT-6).